Here is a 411-residue protein sequence, read N- to C-terminus: Floricaula/leafy-like protein (411 aa).

Residues 220-259 (PDTNYGSEQTKACKKQKRRRSKDSGEDGEERQREHPFIVT) form a disordered region. The span at 231-240 (ACKKQKRRRS) shows a compositional bias: basic residues. Over residues 241–255 (KDSGEDGEERQREHP) the composition is skewed to basic and acidic residues. 3 consecutive DNA-binding regions follow at residues 252–256 (REHPF), 321–328 (NKPKMRHY), and 392–395 (YVPT).

The protein belongs to the FLO/LFY family. As to expression, expressed in vegetative buds and male cones but not in female cones, vascular tissue, roots or secondary needles.

The protein localises to the nucleus. Probable transcription factor. This chain is Floricaula/leafy-like protein (FLL), found in Pinus radiata (Monterey pine).